Reading from the N-terminus, the 1049-residue chain is Carbamoyl phosphate synthase large chain (1049 aa).

The interval 1-399 (MRESVRKVLV…SLQKAVRMLD (399 aa)) is carboxyphosphate synthetic domain. ATP-binding residues include R127, R167, G173, G174, K206, L208, E213, G239, V240, H241, Q282, and E296. Positions 131-325 (RETMINVGLP…LAYVSAKLAL (195 aa)) constitute an ATP-grasp 1 domain. 3 residues coordinate Mg(2+): Q282, E296, and N298. Mn(2+) is bound by residues Q282, E296, and N298. The interval 400–548 (IGEPGVVGGK…LTYNGTEDDI (149 aa)) is oligomerization domain. Positions 549 to 930 (EFSEAGNKLL…LKSWLSSSPN (382 aa)) are carbamoyl phosphate synthetic domain. The ATP-grasp 2 domain occupies 674 to 864 (SKLLDKLGIK…IISLALDGIL (191 aa)). Residues R710, K749, L751, E756, G780, V781, H782, S783, Q823, and E835 each contribute to the ATP site. Mg(2+) is bound by residues Q823, E835, and N837. Mn(2+)-binding residues include Q823, E835, and N837. An MGS-like domain is found at 930 to 1049 (NKIPNKEGIA…YEISEYGAGI (120 aa)). Positions 931-1049 (KIPNKEGIAL…YEISEYGAGI (119 aa)) are allosteric domain.

The protein belongs to the CarB family. In terms of assembly, composed of two chains; the small (or glutamine) chain promotes the hydrolysis of glutamine to ammonia, which is used by the large (or ammonia) chain to synthesize carbamoyl phosphate. Tetramer of heterodimers (alpha,beta)4. The cofactor is Mg(2+). Mn(2+) serves as cofactor.

It catalyses the reaction hydrogencarbonate + L-glutamine + 2 ATP + H2O = carbamoyl phosphate + L-glutamate + 2 ADP + phosphate + 2 H(+). It carries out the reaction hydrogencarbonate + NH4(+) + 2 ATP = carbamoyl phosphate + 2 ADP + phosphate + 2 H(+). It participates in amino-acid biosynthesis; L-arginine biosynthesis; carbamoyl phosphate from bicarbonate: step 1/1. The protein operates within pyrimidine metabolism; UMP biosynthesis via de novo pathway; (S)-dihydroorotate from bicarbonate: step 1/3. In terms of biological role, large subunit of the glutamine-dependent carbamoyl phosphate synthetase (CPSase). CPSase catalyzes the formation of carbamoyl phosphate from the ammonia moiety of glutamine, carbonate, and phosphate donated by ATP, constituting the first step of 2 biosynthetic pathways, one leading to arginine and/or urea and the other to pyrimidine nucleotides. The large subunit (synthetase) binds the substrates ammonia (free or transferred from glutamine from the small subunit), hydrogencarbonate and ATP and carries out an ATP-coupled ligase reaction, activating hydrogencarbonate by forming carboxy phosphate which reacts with ammonia to form carbamoyl phosphate. In Sulfurisphaera tokodaii (strain DSM 16993 / JCM 10545 / NBRC 100140 / 7) (Sulfolobus tokodaii), this protein is Carbamoyl phosphate synthase large chain.